Consider the following 167-residue polypeptide: Ribosome maturation factor RimM (167 aa).

A PRC barrel domain is found at 94-165 (ENEFYYSDII…KIIITPMEGL (72 aa)).

The protein belongs to the RimM family. Binds ribosomal protein uS19.

The protein localises to the cytoplasm. An accessory protein needed during the final step in the assembly of 30S ribosomal subunit, possibly for assembly of the head region. Essential for efficient processing of 16S rRNA. May be needed both before and after RbfA during the maturation of 16S rRNA. It has affinity for free ribosomal 30S subunits but not for 70S ribosomes. This chain is Ribosome maturation factor RimM, found in Staphylococcus aureus (strain MRSA252).